A 150-amino-acid polypeptide reads, in one-letter code: UPF0540 protein At1g62080 (150 aa).

A signal peptide spans 1 to 21 (MNATKFLVLLVIGVLCAIVTA). The span at 119 to 135 (AAAARAKGKVASASRVK) shows a compositional bias: low complexity. Positions 119 to 150 (AAAARAKGKVASASRVKGSSEKKKKDRKGKKD) are disordered.

The protein belongs to the UPF0540 family.

The chain is UPF0540 protein At1g62080 from Arabidopsis thaliana (Mouse-ear cress).